The sequence spans 537 residues: Carboxypeptidase Y homolog A (537 aa).

The first 17 residues, 1-17 (MRLSTSALVLGAASSAV), serve as a signal peptide directing secretion. A propeptide spanning residues 18 to 124 (AFDQKVLGDL…RLDNYNLRAK (107 aa)) is cleaved from the precursor. Disulfide bonds link Cys178/Cys418, Cys312/Cys326, Cys336/Cys359, Cys343/Cys352, and Cys381/Cys388. Asn209 is a glycosylation site (N-linked (GlcNAc...) asparagine). Ser265 is an active-site residue. Asp457 is an active-site residue. Asn503 is a glycosylation site (N-linked (GlcNAc...) asparagine). The active site involves His514.

This sequence belongs to the peptidase S10 family.

Its subcellular location is the vacuole. It carries out the reaction Release of a C-terminal amino acid with broad specificity.. In terms of biological role, vacuolar carboxypeptidase involved in degradation of small peptides. Digests preferentially peptides containing an aliphatic or hydrophobic residue in P1' position, as well as methionine, leucine or phenylalanine in P1 position of ester substrate. In Fusarium vanettenii (strain ATCC MYA-4622 / CBS 123669 / FGSC 9596 / NRRL 45880 / 77-13-4) (Fusarium solani subsp. pisi), this protein is Carboxypeptidase Y homolog A (CPYA).